Here is a 172-residue protein sequence, read N- to C-terminus: RNA pyrophosphohydrolase (172 aa).

The Nudix hydrolase domain maps to 8–153 (QHRPNVGVVL…KRGVYEAVVA (146 aa)). Residues 43-64 (GGVDEGEDLEVAARRELAEETG) carry the Nudix box motif.

Belongs to the Nudix hydrolase family. RppH subfamily. The cofactor is a divalent metal cation.

In terms of biological role, accelerates the degradation of transcripts by removing pyrophosphate from the 5'-end of triphosphorylated RNA, leading to a more labile monophosphorylated state that can stimulate subsequent ribonuclease cleavage. The polypeptide is RNA pyrophosphohydrolase (Caulobacter vibrioides (strain ATCC 19089 / CIP 103742 / CB 15) (Caulobacter crescentus)).